Here is a 187-residue protein sequence, read N- to C-terminus: Elongation factor P (187 aa).

The protein belongs to the elongation factor P family.

The protein resides in the cytoplasm. Its pathway is protein biosynthesis; polypeptide chain elongation. Involved in peptide bond synthesis. Stimulates efficient translation and peptide-bond synthesis on native or reconstituted 70S ribosomes in vitro. Probably functions indirectly by altering the affinity of the ribosome for aminoacyl-tRNA, thus increasing their reactivity as acceptors for peptidyl transferase. This Ruegeria sp. (strain TM1040) (Silicibacter sp.) protein is Elongation factor P.